A 200-amino-acid polypeptide reads, in one-letter code: MARVLVVLSVVVASLFFSQGATFENQRLFNNAVIRVQHLHQLAAKMMDDFEEALLPEERKQLSKIFPLSFCNSDSIEAPAGKDETQKSSVLKLLHTSYRLIESWEFPSKNLGNPNHISEKLADLKMGIGVLIEGCVDGQTSLDENDAFAPPFEDFYQTLSEGNLKKSFRLLSCFKKDMHKVETYLSVAKCRRSLDSNCTL.

The N-terminal stretch at 1–22 (MARVLVVLSVVVASLFFSQGAT) is a signal peptide. A Zn(2+)-binding site is contributed by His38. A disulfide bond links Cys71 and Cys173. A Zn(2+)-binding site is contributed by Glu182. Cys190 and Cys198 are joined by a disulfide.

Belongs to the somatotropin/prolactin family.

It localises to the secreted. Growth hormone plays an important role in growth control and is involved in the regulation of several anabolic processes. Implicated as an osmoregulatory substance important for seawater adaptation. The protein is Somatotropin (gh) of Heteropneustes fossilis (Stinging catfish).